A 626-amino-acid polypeptide reads, in one-letter code: Conserved oligomeric Golgi complex subunit 8 (626 aa).

Residues 580–598 (PAPAPALPPNAPSPEPVTP) show a composition bias toward pro residues. A disordered region spans residues 580-626 (PAPAPALPPNAPSPEPVTPVTPAVPDAGQEEVESAGPPQPDEPSAGI).

Belongs to the COG8 family. As to quaternary structure, component of the conserved oligomeric Golgi complex which is composed of eight different subunits and is required for normal Golgi morphology and localization.

The protein resides in the golgi apparatus membrane. In terms of biological role, required for normal Golgi function. The polypeptide is Conserved oligomeric Golgi complex subunit 8 (COG8) (Bos taurus (Bovine)).